Here is a 133-residue protein sequence, read N- to C-terminus: Ribonuclease VapC17 (133 aa).

Asp-7 and Asp-93 together coordinate Mg(2+). Residues 30–118 (AICDIGELEW…HHDRDYKRIA (89 aa)) form the PINc domain.

This sequence belongs to the PINc/VapC protein family. It depends on Mg(2+) as a cofactor.

Functionally, toxic component of a type II toxin-antitoxin (TA) system. An RNase. The cognate antitoxin is VapB17. The sequence is that of Ribonuclease VapC17 from Mycobacterium tuberculosis (strain CDC 1551 / Oshkosh).